A 226-amino-acid chain; its full sequence is Large ribosomal subunit protein uL1 (226 aa).

It belongs to the universal ribosomal protein uL1 family. As to quaternary structure, part of the 50S ribosomal subunit.

Its function is as follows. Binds directly to 23S rRNA. The L1 stalk is quite mobile in the ribosome, and is involved in E site tRNA release. Functionally, protein L1 is also a translational repressor protein, it controls the translation of the L11 operon by binding to its mRNA. This Buchnera aphidicola subsp. Cinara cedri (strain Cc) protein is Large ribosomal subunit protein uL1.